Consider the following 126-residue polypeptide: Small ribosomal subunit protein uS13 (126 aa).

Residues 95–126 are disordered; that stretch reads GLPVRGQRTHTNARTRKGPRKTVAGKKKPGKK.

The protein belongs to the universal ribosomal protein uS13 family. Part of the 30S ribosomal subunit. Forms a loose heterodimer with protein S19. Forms two bridges to the 50S subunit in the 70S ribosome.

In terms of biological role, located at the top of the head of the 30S subunit, it contacts several helices of the 16S rRNA. In the 70S ribosome it contacts the 23S rRNA (bridge B1a) and protein L5 of the 50S subunit (bridge B1b), connecting the 2 subunits; these bridges are implicated in subunit movement. Contacts the tRNAs in the A and P-sites. In Acidothermus cellulolyticus (strain ATCC 43068 / DSM 8971 / 11B), this protein is Small ribosomal subunit protein uS13.